The following is a 231-amino-acid chain: Large ribosomal subunit protein uL1 (231 aa).

It belongs to the universal ribosomal protein uL1 family. In terms of assembly, part of the 50S ribosomal subunit.

Its function is as follows. Binds directly to 23S rRNA. The L1 stalk is quite mobile in the ribosome, and is involved in E site tRNA release. In terms of biological role, protein L1 is also a translational repressor protein, it controls the translation of the L11 operon by binding to its mRNA. This Staphylococcus epidermidis (strain ATCC 35984 / DSM 28319 / BCRC 17069 / CCUG 31568 / BM 3577 / RP62A) protein is Large ribosomal subunit protein uL1.